A 187-amino-acid polypeptide reads, in one-letter code: UPF0669 protein C6orf120 homolog (187 aa).

A signal peptide spans 1 to 23 (MVEYWKRNFFMVLVLQAFYLANC). An N-linked (GlcNAc...) asparagine glycan is attached at Asn47.

This sequence belongs to the UPF0669 family.

Its subcellular location is the secreted. This chain is UPF0669 protein C6orf120 homolog, found in Xenopus tropicalis (Western clawed frog).